The sequence spans 255 residues: F-box/SPRY domain-containing protein 1 (255 aa).

Positions 3–51 (DPVAALCNYNVLEVIFSYLELEDLNHCSQVCKSWYHFLNDENSDVWRWH) constitute an F-box domain. A B30.2/SPRY domain is found at 61 to 253 (LKSDLLASVS…VSMVYLGTPL (193 aa)).

Belongs to the FBXO45/Fsn family. In terms of assembly, component of an E3 ubiquitin ligase complex composed of hiw and Fsn.

The protein localises to the synapse. It functions in the pathway protein modification; protein ubiquitination. Required in the presynaptic motoneuron to down-regulate the levels of wnd and restrain synaptic terminal growth at the neuromuscular junction (NMJ). This is F-box/SPRY domain-containing protein 1 from Drosophila yakuba (Fruit fly).